We begin with the raw amino-acid sequence, 534 residues long: Peptide chain release factor 3 (534 aa).

Residues 9 to 278 (ARRRTFAIIS…FFIEHAPPPQ (270 aa)) enclose the tr-type G domain. GTP is bound by residues 18-25 (SHPDAGKT), 86-90 (DTPGH), and 140-143 (NKLD).

This sequence belongs to the TRAFAC class translation factor GTPase superfamily. Classic translation factor GTPase family. PrfC subfamily.

The protein resides in the cytoplasm. In terms of biological role, increases the formation of ribosomal termination complexes and stimulates activities of RF-1 and RF-2. It binds guanine nucleotides and has strong preference for UGA stop codons. It may interact directly with the ribosome. The stimulation of RF-1 and RF-2 is significantly reduced by GTP and GDP, but not by GMP. This chain is Peptide chain release factor 3, found in Xanthomonas oryzae pv. oryzae (strain PXO99A).